A 366-amino-acid chain; its full sequence is Ribosomal RNA large subunit methyltransferase M (366 aa).

S-adenosyl-L-methionine-binding positions include serine 188, 221–224 (CPGG), aspartate 240, aspartate 260, and aspartate 277. Catalysis depends on lysine 306, which acts as the Proton acceptor.

This sequence belongs to the class I-like SAM-binding methyltransferase superfamily. RNA methyltransferase RlmE family. RlmM subfamily. Monomer.

It is found in the cytoplasm. It carries out the reaction cytidine(2498) in 23S rRNA + S-adenosyl-L-methionine = 2'-O-methylcytidine(2498) in 23S rRNA + S-adenosyl-L-homocysteine + H(+). Functionally, catalyzes the 2'-O-methylation at nucleotide C2498 in 23S rRNA. This chain is Ribosomal RNA large subunit methyltransferase M, found in Photorhabdus sp. (strain Az29).